A 287-amino-acid chain; its full sequence is Melatonin receptor type 1B-A (287 aa).

The Extracellular segment spans residues 1-28 (MPENVSLIRNRTEVGQGRAWGSGAGARP). N-linked (GlcNAc...) asparagine glycans are attached at residues Asn4 and Asn10. A helical membrane pass occupies residues 29–49 (AWVVMVLAGVLIFTSVVDVLG). Over 50–69 (NVLVIISVLRNRKLRNAGNA) the chain is Cytoplasmic. The chain crosses the membrane as a helical span at residues 70–90 (FVVSLAFADLLVVCYPYPLVL). The Extracellular portion of the chain corresponds to 91–107 (HAMLHAGWLPGEMECKV). Cys105 and Cys182 form a disulfide bridge. A helical transmembrane segment spans residues 108 to 128 (SGFLMGASVIGSIFNITAIAI). Residues 129 to 149 (NRYCFICQANTYEKIYGRAGT) lie on the Cytoplasmic side of the membrane. A helical transmembrane segment spans residues 150–170 (LVLLTLVWVLTAIAILPNLSL). Over 171–192 (GSLTYDPRVYSCTFSQTTSAGY) the chain is Extracellular. A helical membrane pass occupies residues 193 to 213 (TIAVVTVHFLLPIAVVTFCYL). At 214–245 (RIWVLVLRVRRRVTTDVRPRLRPSELRHFLTM) the chain is on the cytoplasmic side. A helical transmembrane segment spans residues 246–266 (FVVFVLFAVCWAPLNLIGLAV). Residues 267–275 (AVDPPRVGP) lie on the Extracellular side of the membrane. A helical membrane pass occupies residues 276-287 (LVPDWLFVMSYF).

It belongs to the G-protein coupled receptor 1 family.

Its subcellular location is the cell membrane. High affinity receptor for melatonin. The activity of this receptor is mediated by pertussis toxin sensitive G proteins that inhibits adenylate cyclase activity. In Danio rerio (Zebrafish), this protein is Melatonin receptor type 1B-A (mtnr1ba).